The chain runs to 315 residues: Ester hydrolase C11orf54 homolog (315 aa).

Histidine 266, histidine 268, and histidine 278 together coordinate Zn(2+).

As to quaternary structure, monomer.

It localises to the nucleus. Functionally, exhibits ester hydrolase activity on the substrate p-nitrophenyl acetate. The polypeptide is Ester hydrolase C11orf54 homolog (Bos taurus (Bovine)).